We begin with the raw amino-acid sequence, 621 residues long: 1-deoxy-D-xylulose-5-phosphate synthase (621 aa).

Thiamine diphosphate is bound by residues histidine 80 and 121-123 (GHS). Aspartate 152 provides a ligand contact to Mg(2+). Thiamine diphosphate is bound by residues 153 to 154 (GA), asparagine 181, tyrosine 288, and glutamate 370. Asparagine 181 lines the Mg(2+) pocket.

The protein belongs to the transketolase family. DXPS subfamily. Homodimer. Mg(2+) is required as a cofactor. Thiamine diphosphate serves as cofactor.

The catalysed reaction is D-glyceraldehyde 3-phosphate + pyruvate + H(+) = 1-deoxy-D-xylulose 5-phosphate + CO2. The protein operates within metabolic intermediate biosynthesis; 1-deoxy-D-xylulose 5-phosphate biosynthesis; 1-deoxy-D-xylulose 5-phosphate from D-glyceraldehyde 3-phosphate and pyruvate: step 1/1. Its function is as follows. Catalyzes the acyloin condensation reaction between C atoms 2 and 3 of pyruvate and glyceraldehyde 3-phosphate to yield 1-deoxy-D-xylulose-5-phosphate (DXP). The polypeptide is 1-deoxy-D-xylulose-5-phosphate synthase (Vibrio campbellii (strain ATCC BAA-1116)).